Consider the following 629-residue polypeptide: tRNA uridine 5-carboxymethylaminomethyl modification enzyme MnmG (629 aa).

13–18 (GGGHAG) contributes to the FAD binding site. Residue 273-287 (GPRYCPSIEDKIHRF) coordinates NAD(+).

This sequence belongs to the MnmG family. As to quaternary structure, homodimer. Heterotetramer of two MnmE and two MnmG subunits. The cofactor is FAD.

The protein localises to the cytoplasm. NAD-binding protein involved in the addition of a carboxymethylaminomethyl (cmnm) group at the wobble position (U34) of certain tRNAs, forming tRNA-cmnm(5)s(2)U34. The polypeptide is tRNA uridine 5-carboxymethylaminomethyl modification enzyme MnmG (Shewanella baltica (strain OS155 / ATCC BAA-1091)).